The chain runs to 128 residues: Con-Ins F1 (128 aa).

A signal peptide spans 1–24; the sequence is MTTSSYFLLVTLGLLLYVCRSSFG. Cystine bridges form between Cys-29–Cys-104, Cys-41–Cys-107, Cys-53–Cys-120, and Cys-106–Cys-111. The propeptide at 59-89 is c peptide; sequence LQGGTGKKRGRASPLRKRRAFLSMLKARAKR. The residue at position 115 (Glu-115) is a 4-carboxyglutamate; partial. A Serine amide modification is found at Ser-127.

Belongs to the insulin family. Heterodimer of A and B chains; disulfide-linked. As to expression, expressed by the venom gland.

It localises to the secreted. Its function is as follows. This venom insulin facilitates prey capture by rapidly inducing hypoglycemic shock. Intraperitoneal injection of this peptide into zebrafish lowers blood glucose with the same potency than human insulin. In vivo, when applied to water, this peptide reduces overall locomotor activity of zebrafish larvae, observed as a significant decrease in the percentage of time spent swimming and movement frequency. The polypeptide is Con-Ins F1 (Conus floridulus (Cone snail)).